A 284-amino-acid chain; its full sequence is Xyloglucan endotransglucosylase/hydrolase protein 22 (284 aa).

The first 21 residues, 1-21 (MAITYLLPLFLSLIITSSVSA), serve as a signal peptide directing secretion. The GH16 domain maps to 22–211 (NFQRDVEITW…WSKAPFTASY (190 aa)). Glu97 acts as the Nucleophile in catalysis. Catalysis depends on Glu101, which acts as the Proton donor. Glu101 provides a ligand contact to xyloglucan. A glycan (N-linked (GlcNAc...) asparagine) is linked at Asn105. Xyloglucan contacts are provided by residues 114–116 (HTN), 124–126 (DKE), 190–191 (DW), and Gly195. Cys219 and Cys228 form a disulfide bridge. Residue Asn230 is glycosylated (N-linked (GlcNAc...) asparagine). Cys267 and Cys281 form a disulfide bridge. Arg272 is a binding site for xyloglucan.

It belongs to the glycosyl hydrolase 16 family. XTH group 2 subfamily. In terms of processing, contains at least one intrachain disulfide bond essential for its enzymatic activity. N-glycosylated; essential for its enzymatic activity. Highly expressed. Predominantly expressed in green siliques. Expressed in young expanding leaves, trichomes, lateral root primordia, vascular tissue, abscission zones and elongating hypocols. Following wind stimulation, it decreases in the leaves of wind-stimulated plants, while it strongly increases in sites around cells of the pith parenchyma, between the vascular elements, and within the epidermis.

It is found in the secreted. The protein resides in the cell wall. It localises to the extracellular space. Its subcellular location is the apoplast. It carries out the reaction breaks a beta-(1-&gt;4) bond in the backbone of a xyloglucan and transfers the xyloglucanyl segment on to O-4 of the non-reducing terminal glucose residue of an acceptor, which can be a xyloglucan or an oligosaccharide of xyloglucan.. In terms of biological role, catalyzes xyloglucan endohydrolysis (XEH) and/or endotransglycosylation (XET). Cleaves and religates xyloglucan polymers, an essential constituent of the primary cell wall, and thereby participates in cell wall construction of growing tissues. Its induction in case of mechanical stress, suggests that it may contribute in the adaptive changes in morphogenesis by being recruited to alter tissues tensil strength, or flexibility, enabling adaptation to mechanically stressful environments. In Arabidopsis thaliana (Mouse-ear cress), this protein is Xyloglucan endotransglucosylase/hydrolase protein 22 (XTH22).